The following is a 466-amino-acid chain: Alpha-1A adrenergic receptor (466 aa).

The Extracellular portion of the chain corresponds to Met-1–Lys-25. N-linked (GlcNAc...) asparagine glycans are attached at residues Asn-7 and Asn-13. A helical transmembrane segment spans residues Ala-26–Val-51. Residues Ala-52–Tyr-63 lie on the Cytoplasmic side of the membrane. The helical transmembrane segment at Tyr-64–Leu-89 threads the bilayer. Over Gly-90–Cys-99 the chain is Extracellular. Residues Asn-100–Ile-122 traverse the membrane as a helical segment. Topologically, residues Asp-123–Gly-143 are cytoplasmic. Residues Leu-144–Pro-168 traverse the membrane as a helical segment. The Extracellular portion of the chain corresponds to Ala-169–Asp-181. Residues Pro-182 to Cys-205 form a helical membrane-spanning segment. At Arg-206–Lys-272 the chain is on the cytoplasmic side. The chain crosses the membrane as a helical span at residues Thr-273–Phe-297. Residues Phe-298–Ser-304 are Extracellular-facing. Residues Glu-305 to Ser-329 traverse the membrane as a helical segment. Residues Ser-330–Val-466 lie on the Cytoplasmic side of the membrane. The short motif at Lys-334–Lys-349 is the Nuclear localization signal element. Cys-345 is lipidated: S-palmitoyl cysteine.

The protein belongs to the G-protein coupled receptor 1 family. Adrenergic receptor subfamily. ADRA1A sub-subfamily. In terms of assembly, homo- and heterooligomer. Heterooligomerizes with ADRA1B homooligomers in cardiac myocytes. Interacts with CAVIN4.

Its subcellular location is the nucleus membrane. It is found in the cell membrane. It localises to the cytoplasm. The protein localises to the membrane. The protein resides in the caveola. This alpha-adrenergic receptor mediates its action by association with G proteins that activate a phosphatidylinositol-calcium second messenger system. Its effect is mediated by G(q) and G(11) proteins. Nuclear ADRA1A-ADRA1B heterooligomers regulate phenylephrine (PE)-stimulated ERK signaling in cardiac myocytes. This is Alpha-1A adrenergic receptor (ADRA1A) from Cavia porcellus (Guinea pig).